A 616-amino-acid polypeptide reads, in one-letter code: Chaperone protein HscA homolog (616 aa).

The protein belongs to the heat shock protein 70 family.

In terms of biological role, chaperone involved in the maturation of iron-sulfur cluster-containing proteins. Has a low intrinsic ATPase activity which is markedly stimulated by HscB. This Tolumonas auensis (strain DSM 9187 / NBRC 110442 / TA 4) protein is Chaperone protein HscA homolog.